A 422-amino-acid polypeptide reads, in one-letter code: Protein king tubby 2 (422 aa).

A disordered region spans residues 49-169 (PSNPDQIISS…ASGHNDAEGD (121 aa)). Over residues 57-81 (SSGSPTTVTATGTTTGSVTTTPTSP) the composition is skewed to low complexity.

This sequence belongs to the TUB family.

It localises to the cytoplasm. Its subcellular location is the nucleus. This Culex quinquefasciatus (Southern house mosquito) protein is Protein king tubby 2 (king-tubby2).